A 489-amino-acid chain; its full sequence is Rhamnulokinase (489 aa).

13 to 17 lines the ATP pocket; sequence ASSGR. An intrachain disulfide couples cysteine 68 to cysteine 222. Residues glycine 83 and 236-238 contribute to the substrate site; that span reads HDT. Catalysis depends on aspartate 237, which acts as the Proton acceptor. Threonine 259 lines the ATP pocket. Asparagine 296 contributes to the substrate binding site. Glutamine 304 serves as a coordination point for ATP. Cysteine 353 and cysteine 370 are oxidised to a cystine. Glycine 402 lines the ATP pocket. Cysteine 413 and cysteine 417 are oxidised to a cystine.

The protein belongs to the rhamnulokinase family. In terms of assembly, monomer. The cofactor is Mg(2+).

The enzyme catalyses L-rhamnulose + ATP = L-rhamnulose 1-phosphate + ADP + H(+). The protein operates within carbohydrate degradation; L-rhamnose degradation; glycerone phosphate from L-rhamnose: step 2/3. Involved in the catabolism of L-rhamnose (6-deoxy-L-mannose). Catalyzes the transfer of the gamma-phosphate group from ATP to the 1-hydroxyl group of L-rhamnulose to yield L-rhamnulose 1-phosphate. The chain is Rhamnulokinase from Escherichia coli O7:K1 (strain IAI39 / ExPEC).